Reading from the N-terminus, the 600-residue chain is MVNNMTDLTAQDAAWSTRDHLDDPVIGELRNRFGPDAFTVQATRTGIPVVWVKREQLLEVGDFLKKLPKPYVMLFDLHGMDERLRTHRDGLPAADFSVFYHLISIERNRDIMLKVALSENDLRVPTFTKLFPNANWYERETWEMFGIDIEGHPHLTRIMMPQTWEGHPLRKDYPARATEFDPFELTKAKQDLEMEALTFKPEDWGMKRGTDNEDFMFLNLGPNHPSAHGAFRIILQLDGEEIVDCVPDIGYHHRGAEKMGERQSWHSYIPYTDRIEYLGGCVNEMPYVLAVEKLAGITVPDRVNVIRVMLSELFRINSHLLYISTFIQDVGAMTPVFFAFTDRQKIYDLVEAITGFRMHPAWFRIGGVAHDLPRGWDRLLREFLEWMPKRLDSYEKAALRNTILKGRSQGVAAYGAKEALEWGTTGAGLRATGIDFDVRKWRPYSGYENFDFEVPVGGGVSDCYTRVMLKVEELRQSLRILQQCLDNMPEGPFKADHPLTTPPPKERTLQHIETLITHFLQVSWGPVMPAQESFQMVEATKGINSYYLTSDGSTMSYRTRVRTPSFAHLQQIPSAIRGSLVSDLIVYLGSIDFVMSDVDR.

The interval 1–190 (MVNNMTDLTA…DPFELTKAKQ (190 aa)) is NADH dehydrogenase I subunit C. The tract at residues 214 to 600 (DFMFLNLGPN…IDFVMSDVDR (387 aa)) is NADH dehydrogenase I subunit D.

It in the N-terminal section; belongs to the complex I 30 kDa subunit family. This sequence in the C-terminal section; belongs to the complex I 49 kDa subunit family. NDH-1 is composed of 13 different subunits. Subunits NuoB, CD, E, F, and G constitute the peripheral sector of the complex.

The protein localises to the cell inner membrane. It carries out the reaction a quinone + NADH + 5 H(+)(in) = a quinol + NAD(+) + 4 H(+)(out). NDH-1 shuttles electrons from NADH, via FMN and iron-sulfur (Fe-S) centers, to quinones in the respiratory chain. The immediate electron acceptor for the enzyme in this species is believed to be ubiquinone. Couples the redox reaction to proton translocation (for every two electrons transferred, four hydrogen ions are translocated across the cytoplasmic membrane), and thus conserves the redox energy in a proton gradient. This is NADH-quinone oxidoreductase subunit C/D from Salmonella paratyphi A (strain ATCC 9150 / SARB42).